Reading from the N-terminus, the 558-residue chain is Potassium-transporting ATPase potassium-binding subunit (558 aa).

The next 12 helical transmembrane spans lie at 1-21 (MEII…SGYL), 66-86 (FNGF…WLFL), 127-147 (MIVM…VCIA), 166-186 (IVRF…ILLM), 245-265 (IWSN…MLFL), 281-301 (ALIL…LTMW), 327-347 (FGAG…TGSV), 354-374 (LTPL…VFGG), 377-397 (VGLM…SLMV), 416-436 (IVLV…LAFM), 482-502 (ISTG…QLMI), and 531-551 (IVFI…LGPI).

This sequence belongs to the KdpA family. In terms of assembly, the system is composed of three essential subunits: KdpA, KdpB and KdpC.

It is found in the cell membrane. Functionally, part of the high-affinity ATP-driven potassium transport (or Kdp) system, which catalyzes the hydrolysis of ATP coupled with the electrogenic transport of potassium into the cytoplasm. This subunit binds the extracellular potassium ions and delivers the ions to the membrane domain of KdpB through an intramembrane tunnel. The chain is Potassium-transporting ATPase potassium-binding subunit from Staphylococcus aureus (strain MSSA476).